The primary structure comprises 137 residues: MLQPKRTKYRKMHKGRNDGLAWSGNAVSFGEYGLKATAHGQLTARQIEAARRTISRHVKKGGKMWIRVFPDKPITKKPIEVRMGSGKGNVEYWVAQIQPGRMIYEIEGIPEETAREAFRLAAAKLSVTTTFVTRTVR.

Belongs to the universal ribosomal protein uL16 family. In terms of assembly, part of the 50S ribosomal subunit.

Functionally, binds 23S rRNA and is also seen to make contacts with the A and possibly P site tRNAs. This chain is Large ribosomal subunit protein uL16, found in Xanthomonas axonopodis pv. citri (strain 306).